Here is a 184-residue protein sequence, read N- to C-terminus: dTTP/UTP pyrophosphatase (184 aa).

The active-site Proton acceptor is the Asp-65.

The protein belongs to the Maf family. YhdE subfamily. A divalent metal cation is required as a cofactor.

It localises to the cytoplasm. The enzyme catalyses dTTP + H2O = dTMP + diphosphate + H(+). The catalysed reaction is UTP + H2O = UMP + diphosphate + H(+). Its function is as follows. Nucleoside triphosphate pyrophosphatase that hydrolyzes dTTP and UTP. May have a dual role in cell division arrest and in preventing the incorporation of modified nucleotides into cellular nucleic acids. In Thermococcus onnurineus (strain NA1), this protein is dTTP/UTP pyrophosphatase.